The primary structure comprises 816 residues: Mechanosensitive cation channel TMEM63B (816 aa).

The Extracellular segment spans residues 1-46 (MLPYVIATLGSAGSTCKASTCSNSTKDYCYSARIRSTVLQGLPFGG). A helical transmembrane segment spans residues 47-71 (VPTVLALDFMCFLALLFVFSILRKV). 2 S-palmitoyl cysteine lipidation sites follow: C57 and C119. Residues 72–138 (AWDYGRLALV…KDDEIRDKCG (67 aa)) are Cytoplasmic-facing. Residues 139–171 (GDAVHYLSFQRHIIGLLVAVGVLSVGIVLPVNF) form a helical membrane-spanning segment. Topologically, residues 172 to 195 (SGDLLENNAYSFGRTTIANLNSGN) are extracellular. A helical membrane pass occupies residues 196-220 (NLLWLHTSFAFLYLLLTVYSMRRHT). Residues 221 to 420 (SKMRYKEDDL…IYWEHLSIRG (200 aa)) are Cytoplasmic-facing. Positions 224-419 (RYKEDDLVKR…NIYWEHLSIR (196 aa)) are intracellular linker IL2; confers mechanosensitivity. S-palmitoyl cysteine attachment occurs at residues C375 and C391. The helical transmembrane segment at 421 to 450 (FIWWIRCLVINVVLFILLFFLTTPAIIITT) threads the bilayer. Topologically, residues 451 to 465 (MDKFNVTKPVEYLNN) are extracellular. The chain crosses the membrane as a helical span at residues 466–495 (PIITQFFPTLLLWCFSALLPTIVYYSAFFE). Residues 496-499 (AHWT) are Cytoplasmic-facing. The chain crosses the membrane as a helical span at residues 500–536 (RSGENRTTMHKCYTFLIFMVLLLPSLGLSSLDVFFRW). Residues 537–559 (LFDKKFLAEAAVRFECVFLPDNG) lie on the Extracellular side of the membrane. A helical transmembrane segment spans residues 560 to 592 (AFFVNYVIASAFIGNAMDLLRIPGLLMYMIRLC). The segment at 560 to 592 (AFFVNYVIASAFIGNAMDLLRIPGLLMYMIRLC) is gating helix. Residues 593–612 (LARSAAERRNVKRHQAYEFQ) are Cytoplasmic-facing. A helical transmembrane segment spans residues 613–631 (FGAAYAWMMCVFTVVMTYS). Residues 632–634 (ITC) are Extracellular-facing. The chain crosses the membrane as a helical span at residues 635-659 (PIIVPFGLMYMLLKHLVDRYNLYYA). Residues 660–666 (YLPAKLD) are Cytoplasmic-facing. The chain crosses the membrane as a helical span at residues 667-695 (KKIHSGAVNQVVAAPILCLFWLLFFSTMR). At 696–700 (TGFLA) the chain is on the extracellular side. A helical membrane pass occupies residues 701 to 721 (PTSMFTFVVLVITIVICLCHV). 2 S-palmitoyl cysteine lipidation sites follow: C719 and C722. The Cytoplasmic segment spans residues 722-816 (CFGHFKYLSA…DSLIENEIRQ (95 aa)).

This sequence belongs to the CSC1 (TC 1.A.17) family. Monomer. In terms of processing, palmitoylation is required for localization to the plasma membrane and stability.

It localises to the cell membrane. The protein localises to the lysosome membrane. Its subcellular location is the early endosome membrane. The catalysed reaction is Ca(2+)(in) = Ca(2+)(out). It carries out the reaction Mg(2+)(in) = Mg(2+)(out). The enzyme catalyses K(+)(in) = K(+)(out). It catalyses the reaction Na(+)(in) = Na(+)(out). The catalysed reaction is Cs(+)(in) = Cs(+)(out). In terms of biological role, mechanosensitive cation channel with low conductance and high activation threshold. Osmosensitive cation channel preferentially activated by hypotonic stress. Also acts as a phospholipid scramblase in response to changes in membrane structure: upon changes in membrane curvature and thickness, alters its conformation and translocates phospholipids, thereby controlling plasma membrane lipid distribution. This chain is Mechanosensitive cation channel TMEM63B, found in Gallus gallus (Chicken).